An 88-amino-acid polypeptide reads, in one-letter code: Small ribosomal subunit protein bS20 (88 aa).

It belongs to the bacterial ribosomal protein bS20 family.

Functionally, binds directly to 16S ribosomal RNA. The protein is Small ribosomal subunit protein bS20 of Methylorubrum extorquens (strain CM4 / NCIMB 13688) (Methylobacterium extorquens).